Here is a 793-residue protein sequence, read N- to C-terminus: Probable serine/threonine-protein kinase fnkA (793 aa).

Residues 11–358 form the Protein kinase domain; sequence WEILSQLGTG…IINLISHNFI (348 aa). ATP is bound by residues 17 to 25 and lysine 46; that span reads LGTGAFGRV. Residue aspartate 138 is the Proton acceptor of the active site. 5 FNIP repeats span residues 403–444, 470–514, 515–557, 558–601, and 691–733; these read FNQT…FGAR, YNQP…ILGD, YDQK…LGYR, FNKA…LGYC, and FIRP…LGSR.

It belongs to the protein kinase superfamily. STE Ser/Thr protein kinase family. Mg(2+) serves as cofactor.

The enzyme catalyses L-seryl-[protein] + ATP = O-phospho-L-seryl-[protein] + ADP + H(+). The catalysed reaction is L-threonyl-[protein] + ATP = O-phospho-L-threonyl-[protein] + ADP + H(+). The protein is Probable serine/threonine-protein kinase fnkA of Dictyostelium discoideum (Social amoeba).